We begin with the raw amino-acid sequence, 393 residues long: Phospho-N-acetylmuramoyl-pentapeptide-transferase (393 aa).

The next 10 membrane-spanning stretches (helical) occupy residues 29-49 (RAVM…PIVI), 75-95 (TPTM…LLWF), 101-121 (FVWI…VDDW), 138-158 (YFWQ…SVSE), 193-213 (SISY…VIVG), 226-246 (GLAI…AYAT), 263-283 (AGEL…FLWF), 290-310 (VFMG…IAVI), 315-335 (VVLA…MAQV), and 370-390 (QVVV…LSSL).

This sequence belongs to the glycosyltransferase 4 family. MraY subfamily. It depends on Mg(2+) as a cofactor.

It localises to the cell inner membrane. The catalysed reaction is UDP-N-acetyl-alpha-D-muramoyl-L-alanyl-gamma-D-glutamyl-meso-2,6-diaminopimeloyl-D-alanyl-D-alanine + di-trans,octa-cis-undecaprenyl phosphate = di-trans,octa-cis-undecaprenyl diphospho-N-acetyl-alpha-D-muramoyl-L-alanyl-D-glutamyl-meso-2,6-diaminopimeloyl-D-alanyl-D-alanine + UMP. The protein operates within cell wall biogenesis; peptidoglycan biosynthesis. Its function is as follows. Catalyzes the initial step of the lipid cycle reactions in the biosynthesis of the cell wall peptidoglycan: transfers peptidoglycan precursor phospho-MurNAc-pentapeptide from UDP-MurNAc-pentapeptide onto the lipid carrier undecaprenyl phosphate, yielding undecaprenyl-pyrophosphoryl-MurNAc-pentapeptide, known as lipid I. In Methylibium petroleiphilum (strain ATCC BAA-1232 / LMG 22953 / PM1), this protein is Phospho-N-acetylmuramoyl-pentapeptide-transferase.